Reading from the N-terminus, the 342-residue chain is Aspartate carbamoyltransferase catalytic subunit (342 aa).

Positions 54 and 55 each coordinate carbamoyl phosphate. Position 82 (Lys82) interacts with L-aspartate. Carbamoyl phosphate-binding residues include Arg104, His134, and Gln137. L-aspartate is bound by residues Arg177 and Arg232. Carbamoyl phosphate-binding residues include Gly277 and Pro278.

Belongs to the aspartate/ornithine carbamoyltransferase superfamily. ATCase family. As to quaternary structure, heterododecamer (2C3:3R2) of six catalytic PyrB chains organized as two trimers (C3), and six regulatory PyrI chains organized as three dimers (R2).

It catalyses the reaction carbamoyl phosphate + L-aspartate = N-carbamoyl-L-aspartate + phosphate + H(+). It functions in the pathway pyrimidine metabolism; UMP biosynthesis via de novo pathway; (S)-dihydroorotate from bicarbonate: step 2/3. Its function is as follows. Catalyzes the condensation of carbamoyl phosphate and aspartate to form carbamoyl aspartate and inorganic phosphate, the committed step in the de novo pyrimidine nucleotide biosynthesis pathway. This Pseudarthrobacter chlorophenolicus (strain ATCC 700700 / DSM 12829 / CIP 107037 / JCM 12360 / KCTC 9906 / NCIMB 13794 / A6) (Arthrobacter chlorophenolicus) protein is Aspartate carbamoyltransferase catalytic subunit.